The sequence spans 421 residues: MAKAKVKKDQSPCSGSLGKTANTPKQKRKQKQRKFWQNHPKITTKTGETKKVSLLLPPKGPQEFSSNWKALQELLKPKENQALPATTLAKCPKKDQKVSEKKTEESVPQKSGHKINGGITSVSAIAKGAKAPSQATPTKAAEKSDEVSKGKKRKIMAEATDTEHQGKKPQGEAQPQPPKVDIWFDDVDPDDIEAALGPEAGRVAREMQGITDTRSPTVDKILVKERAFEGLTRTVAMDCEMVGVGMDGEESILARVSIVNLFGKCVYDKYVKPTERVTDYRTAVSGIRPEDVKKGEPFKVVQKEVSEILRGRTLVGHAVHNDLKILFLDHPKKAIRDTQKYKPFKQKVKSGRPSLKLLCEKILNVKVQTGEHCSVQDAQAAMRLYTMEKKSWEVAIKAKYTGVMPVDRKSKGPQKDKQCPQ.

Disordered regions lie at residues 1-51 (MAKA…ETKK) and 79-179 (ENQA…QPPK). The segment covering 11–24 (SPCSGSLGKTANTP) has biased composition (polar residues). The segment covering 25–36 (KQKRKQKQRKFW) has biased composition (basic residues). Basic and acidic residues-rich tracts occupy residues 92–107 (PKKD…EESV), 140–149 (AAEKSDEVSK), and 161–170 (DTEHQGKKPQ). The Exonuclease domain occupies 234–385 (TVAMDCEMVG…QDAQAAMRLY (152 aa)).

It belongs to the REXO4 family.

Its subcellular location is the nucleus. The chain is RNA exonuclease 4 (rexo4) from Xenopus laevis (African clawed frog).